The chain runs to 512 residues: GMP synthase [glutamine-hydrolyzing] (512 aa).

One can recognise a Glutamine amidotransferase type-1 domain in the interval 7 to 197 (TIIVLDFGSQ…VFGVCGCSEG (191 aa)). Cysteine 84 serves as the catalytic Nucleophile. Residues histidine 171 and glutamate 173 contribute to the active site. In terms of domain architecture, GMPS ATP-PPase spans 198-387 (WNMENFIEVE…LGIPDEIVWR (190 aa)). 225–231 (SGGVDSS) contacts ATP.

In terms of assembly, homodimer.

The catalysed reaction is XMP + L-glutamine + ATP + H2O = GMP + L-glutamate + AMP + diphosphate + 2 H(+). The protein operates within purine metabolism; GMP biosynthesis; GMP from XMP (L-Gln route): step 1/1. Its function is as follows. Catalyzes the synthesis of GMP from XMP. The protein is GMP synthase [glutamine-hydrolyzing] of Bacillus cereus (strain G9842).